The sequence spans 34 residues: Potassium channel toxin alpha-KTx 6.17 (34 aa).

Cystine bridges form between Cys-3–Cys-24, Cys-9–Cys-29, Cys-13–Cys-31, and Cys-19–Cys-34.

Belongs to the short scorpion toxin superfamily. Potassium channel inhibitor family. Alpha-KTx 06 subfamily. Expressed by the venom gland.

It is found in the secreted. Functionally, this toxin reversibly blocks Shaker B potassium-channels (expressed in insect Sf9 cells) with a Kd of 96.6 nM, and presents an even better affinity toward hKv1.3 (KCNA3), blocking it with a Kd of 17.7 nM. This Opisthacanthus cayaporum (South American scorpion) protein is Potassium channel toxin alpha-KTx 6.17.